Reading from the N-terminus, the 512-residue chain is 2-isopropylmalate synthase (512 aa).

The region spanning isoleucine 4–lysine 266 is the Pyruvate carboxyltransferase domain. Mn(2+)-binding residues include aspartate 13, histidine 201, histidine 203, and asparagine 237. The segment at glutamate 390 to lysine 512 is regulatory domain.

This sequence belongs to the alpha-IPM synthase/homocitrate synthase family. LeuA type 1 subfamily. In terms of assembly, homodimer. Requires Mn(2+) as cofactor.

The protein resides in the cytoplasm. The enzyme catalyses 3-methyl-2-oxobutanoate + acetyl-CoA + H2O = (2S)-2-isopropylmalate + CoA + H(+). It functions in the pathway amino-acid biosynthesis; L-leucine biosynthesis; L-leucine from 3-methyl-2-oxobutanoate: step 1/4. Functionally, catalyzes the condensation of the acetyl group of acetyl-CoA with 3-methyl-2-oxobutanoate (2-ketoisovalerate) to form 3-carboxy-3-hydroxy-4-methylpentanoate (2-isopropylmalate). The protein is 2-isopropylmalate synthase of Listeria monocytogenes serotype 4a (strain HCC23).